We begin with the raw amino-acid sequence, 251 residues long: LexA repressor (251 aa).

Residues 26 to 46 (FDEMKDALGLKSKSGIHRLIK) constitute a DNA-binding region (H-T-H motif). Catalysis depends on for autocatalytic cleavage activity residues Ser172 and Lys210.

The protein belongs to the peptidase S24 family. In terms of assembly, homodimer.

The catalysed reaction is Hydrolysis of Ala-|-Gly bond in repressor LexA.. Represses a number of genes involved in the response to DNA damage (SOS response), including recA and lexA. In the presence of single-stranded DNA, RecA interacts with LexA causing an autocatalytic cleavage which disrupts the DNA-binding part of LexA, leading to derepression of the SOS regulon and eventually DNA repair. This Rhodospirillum rubrum (strain ATCC 11170 / ATH 1.1.1 / DSM 467 / LMG 4362 / NCIMB 8255 / S1) protein is LexA repressor.